Here is a 306-residue protein sequence, read N- to C-terminus: MSRAMDITRIPGSAIGAVVAGADFSGTIDDTQVEEIWQALDQHLVLVFRGHKDPSNDDLLMFARRFGHVPKTGLTTGASPDHNEILLISNILDENGQKIGVGNAEWMDWHTDYSFRPRVSRIGFLAAVELPPSGGGQTLFTDMYTAYESLPDDLRQRLHSYRARHSLRSGYEDVIEEEYQGEVSIEGPTAKPFVAPEDGTATVHQLIARNPRTGRRAVYANPLNTKRILELDVTSSKEVLQQLFAKPGEPELTYAHEWLPGDIVMWDQLGTVHAKRAFDPTERRLLRKVVTIFDDPAEPWHPEDAA.

Histidine 110 and aspartate 112 together coordinate Fe cation. Positions 138 and 258 each coordinate 2-oxoglutarate. Histidine 273 provides a ligand contact to Fe cation. Arginine 284 contributes to the 2-oxoglutarate binding site.

Belongs to the TfdA dioxygenase family. Requires Fe(2+) as cofactor.

It catalyses the reaction pentalenolactone D + 2 2-oxoglutarate + 2 O2 = pentalenolactone F + 2 succinate + 2 CO2 + H2O. The protein operates within antibiotic biosynthesis; neopentalenolactone biosynthesis. Its activity is regulated as follows. Activated by ascorbate. Its function is as follows. Catalyzes the Fe(2+) and alpha-ketoglutarate-dependent oxidation of pentalenolactone D to pentalenolactone F. Also able to catalyze the oxidation of pentalenolactone D to pentalenolactone E. In presence of neopentalenolactone D, mediates production of PL308 and possibly neopentalenolactone E. This Streptomyces avermitilis (strain ATCC 31267 / DSM 46492 / JCM 5070 / NBRC 14893 / NCIMB 12804 / NRRL 8165 / MA-4680) protein is Pentalenolactone F synthase (ptlD).